We begin with the raw amino-acid sequence, 140 residues long: Holo-[acyl-carrier-protein] synthase (140 aa).

Residues aspartate 8 and glutamate 62 each contribute to the Mg(2+) site.

The protein belongs to the P-Pant transferase superfamily. AcpS family. Mg(2+) serves as cofactor.

It is found in the cytoplasm. The enzyme catalyses apo-[ACP] + CoA = holo-[ACP] + adenosine 3',5'-bisphosphate + H(+). Functionally, transfers the 4'-phosphopantetheine moiety from coenzyme A to a Ser of acyl-carrier-protein. This Cupriavidus pinatubonensis (strain JMP 134 / LMG 1197) (Cupriavidus necator (strain JMP 134)) protein is Holo-[acyl-carrier-protein] synthase.